Here is a 588-residue protein sequence, read N- to C-terminus: Calcium/calmodulin-dependent protein kinase kinase 2 (588 aa).

Residues 1 to 11 (MSSCVSSQPTS) are compositionally biased toward polar residues. Disordered regions lie at residues 1-34 (MSSC…KPCE) and 64-147 (DLNL…PTVE). Position 2 is an N-acetylserine (Ser-2). Residues Ser-99, Ser-114, Ser-129, Ser-133, and Ser-137 each carry the phosphoserine modification. Residues 101–116 (QEPSQGGPASSSNSLD) are compositionally biased toward polar residues. The segment covering 124-139 (PSLSYSPASSPQSSPR) has biased composition (low complexity). The Protein kinase domain occupies 165 to 446 (YTLKDEIGKG…VPEIKLHPWV (282 aa)). Residues 171-179 (IGKGSYGVV) and Lys-194 each bind ATP. Positions 204–226 (QAGFPRRPPPRGARPAPGGCIQP) are RP domain. Residues 205–225 (AGFPRRPPPRGARPAPGGCIQ) are disordered. Asp-312 functions as the Proton acceptor in the catalytic mechanism. Positions 472–477 (ENSVKH) are autoinhibitory domain. Residues 475–500 (VKHIPSLATVILVKTMIRKRSFGNPF) are calmodulin-binding. Phosphoserine is present on residues Ser-495, Ser-511, Thr-522, and Ser-572. Positions 497 to 588 (GNPFEGSRRE…LQPEEVMEPE (92 aa)) are disordered. The span at 521 to 536 (PTREWEPLSEPKEARQ) shows a compositional bias: basic and acidic residues. Pro residues predominate over residues 570-580 (PGSPPRMPPLQ).

It belongs to the protein kinase superfamily. Ser/Thr protein kinase family. As to quaternary structure, interacts with calmodulin. Autophosphorylated and phosphorylated by PKA. Each isoform may show a different pattern of phosphorylation. As to expression, expressed in all tissues tested. A differential expression pattern compared to CAMKK1 is observed in the brain.

The protein localises to the nucleus. It localises to the cytoplasm. Its subcellular location is the cell projection. The protein resides in the neuron projection. It catalyses the reaction L-seryl-[protein] + ATP = O-phospho-L-seryl-[protein] + ADP + H(+). It carries out the reaction L-threonyl-[protein] + ATP = O-phospho-L-threonyl-[protein] + ADP + H(+). Activated by Ca(2+)/calmodulin. Binding of calmodulin may relieve intrasteric autoinhibition. Autophosphorylation does not alter activity or regulation by Ca(2+)/calmodulin. In part, activity is independent on Ca(2+)/calmodulin. Calcium/calmodulin-dependent protein kinase belonging to a proposed calcium-triggered signaling cascade involved in a number of cellular processes. Phosphorylates CAMK1, CAMK4 and CAMK1D. Efficiently phosphorylates 5'-AMP-activated protein kinase (AMPK) trimer, including that consisting of PRKAA1, PRKAB1 and PRKAG1. This phosphorylation is stimulated in response to Ca(2+) signals. May play a role in neurite growth. Isoform 2 may promote neurite elongation, while isoform 1 may promoter neurite branching. May be involved in hippocampal activation of CREB1. The protein is Calcium/calmodulin-dependent protein kinase kinase 2 (Camkk2) of Mus musculus (Mouse).